Reading from the N-terminus, the 279-residue chain is Thymidylate synthase (279 aa).

132–133 contacts dUMP; it reads RR. The active-site Nucleophile is Cys-153. Residues 178-181, Asn-189, and 219-221 contribute to the dUMP site; these read RSND and HIY. Residue Asp-181 coordinates (6R)-5,10-methylene-5,6,7,8-tetrahydrofolate. Ala-278 provides a ligand contact to (6R)-5,10-methylene-5,6,7,8-tetrahydrofolate.

It belongs to the thymidylate synthase family. Bacterial-type ThyA subfamily. In terms of assembly, homodimer.

It localises to the cytoplasm. The enzyme catalyses dUMP + (6R)-5,10-methylene-5,6,7,8-tetrahydrofolate = 7,8-dihydrofolate + dTMP. The protein operates within pyrimidine metabolism; dTTP biosynthesis. Catalyzes the reductive methylation of 2'-deoxyuridine-5'-monophosphate (dUMP) to 2'-deoxythymidine-5'-monophosphate (dTMP) while utilizing 5,10-methylenetetrahydrofolate (mTHF) as the methyl donor and reductant in the reaction, yielding dihydrofolate (DHF) as a by-product. This enzymatic reaction provides an intracellular de novo source of dTMP, an essential precursor for DNA biosynthesis. The polypeptide is Thymidylate synthase (Lactococcus lactis subsp. cremoris (strain SK11)).